The following is a 708-amino-acid chain: Ion-translocating oxidoreductase complex subunit C (708 aa).

2 consecutive 4Fe-4S ferredoxin-type domains span residues 369–397 (GEPQ…QQLY) and 407–436 (KATT…VQYF). Residues Cys-377, Cys-380, Cys-383, Cys-387, Cys-416, Cys-419, Cys-422, and Cys-426 each coordinate [4Fe-4S] cluster. The segment at 599–686 (KARKLEQQQS…EEQVDPRKAA (88 aa)) is disordered.

It belongs to the 4Fe4S bacterial-type ferredoxin family. RnfC subfamily. In terms of assembly, the complex is composed of six subunits: RsxA, RsxB, RsxC, RsxD, RsxE and RsxG. [4Fe-4S] cluster serves as cofactor.

It localises to the cell inner membrane. Functionally, part of a membrane-bound complex that couples electron transfer with translocation of ions across the membrane. Required to maintain the reduced state of SoxR. This is Ion-translocating oxidoreductase complex subunit C from Escherichia coli (strain 55989 / EAEC).